A 199-amino-acid polypeptide reads, in one-letter code: Protein ZNRD2 (199 aa).

At alanine 2 the chain carries N-acetylalanine. Positions 53, 56, 70, and 73 each coordinate Zn(2+). Residues 93–148 form a disordered region; it reads LSQAREHQLASSTEPASSSRPPSQPPVPRPEHCEGAAAGLKAAQAPPLPAAPPNTD. Serine 94 carries the post-translational modification Phosphoserine. Low complexity predominate over residues 127–137; it reads GAAAGLKAAQA. A Nuclear export signal motif is present at residues 173–194; sequence SLETSIQLCGLIRACAEALGSL.

In terms of assembly, homodimer. It depends on Zn(2+) as a cofactor. In terms of tissue distribution, expressed in the early postnatal brain.

Its subcellular location is the cytoplasm. In terms of biological role, might play a role in mitosis. Could be a centromere-associated protein. Antigenic molecule. May induce anti-centromere antibodies. The protein is Protein ZNRD2 (Znrd2) of Mus musculus (Mouse).